We begin with the raw amino-acid sequence, 622 residues long: Calmodulin-binding protein 60 C (622 aa).

The segment covering 1-19 (MQTRYMERTNSMREKRKLE) has biased composition (basic and acidic residues). A disordered region spans residues 1–35 (MQTRYMERTNSMREKRKLEEDDNQQQQQQPERKRP). Positions 10-89 (NSMREKRKLE…RLSERSSPKR (80 aa)) are calmodulin-binding. The interval 159 to 282 (EDDDGWSGEE…AFHKKLNKAG (124 aa)) is DNA-binding.

The protein belongs to the plant ACBP60 protein family. As to quaternary structure, interacts with calmodulin (CaM). In terms of tissue distribution, expressed in stems, flowers and root.

It localises to the nucleus. In terms of biological role, transcription activator that binds DNA in a sequence-specific manner, likely 5'-GAAATTTTGG-3', to promote the expression of target genes. This Arabidopsis thaliana (Mouse-ear cress) protein is Calmodulin-binding protein 60 C.